Here is a 315-residue protein sequence, read N- to C-terminus: Acetaldehyde dehydrogenase (315 aa).

13 to 16 (SGNI) lines the NAD(+) pocket. Catalysis depends on cysteine 131, which acts as the Acyl-thioester intermediate. NAD(+) is bound by residues 163-171 (SAGPGTRAN) and asparagine 290.

It belongs to the acetaldehyde dehydrogenase family.

It carries out the reaction acetaldehyde + NAD(+) + CoA = acetyl-CoA + NADH + H(+). This Xanthobacter autotrophicus (strain ATCC BAA-1158 / Py2) protein is Acetaldehyde dehydrogenase.